The primary structure comprises 143 residues: 3-hydroxyacyl-[acyl-carrier-protein] dehydratase FabZ (143 aa).

Residue His49 is part of the active site.

It belongs to the thioester dehydratase family. FabZ subfamily.

The protein localises to the cytoplasm. The catalysed reaction is a (3R)-hydroxyacyl-[ACP] = a (2E)-enoyl-[ACP] + H2O. In terms of biological role, involved in unsaturated fatty acids biosynthesis. Catalyzes the dehydration of short chain beta-hydroxyacyl-ACPs and long chain saturated and unsaturated beta-hydroxyacyl-ACPs. The sequence is that of 3-hydroxyacyl-[acyl-carrier-protein] dehydratase FabZ from Wolbachia sp. subsp. Drosophila simulans (strain wRi).